The chain runs to 353 residues: Putrescine N-methyltransferase 2 (353 aa).

Residues 15–50 form a disordered region; sequence KSGAIPMNGHHNGTSKHQNGHKNGTSEQQNGTISLD. Over residues 25-50 the composition is skewed to polar residues; sequence HNGTSKHQNGHKNGTSEQQNGTISLD. The PABS domain occupies 64–301; the sequence is PGWFSEFSAL…GVIGYMLCST (238 aa). S-adenosyl-L-methionine-binding positions include Gln95, Glu170, and 201 to 202; that span reads DG. Residue Asp220 is the Proton acceptor of the active site. Tyr289 provides a ligand contact to S-adenosyl-L-methionine.

The protein belongs to the class I-like SAM-binding methyltransferase superfamily. Putrescine methyltransferase family. Predominantly expressed in roots.

It carries out the reaction putrescine + S-adenosyl-L-methionine = N-methylputrescine + S-adenosyl-L-homocysteine + H(+). It functions in the pathway alkaloid biosynthesis; nicotine biosynthesis. In terms of biological role, involved in the biosynthesis of pyridine alkaloid natural products, leading mainly to the production of anabasine, anatabine, nicotine and nornicotine, effective deterrents against herbivores with antiparasitic and pesticide properties (neurotoxins); nornicotine serves as the precursor in the synthesis of the carcinogen compound N'-nitrosonornicotine (NNN). Methyltransferase that mediates the conversion of putrescine to N-methylputrescine. Promotes leaves ripening. The chain is Putrescine N-methyltransferase 2 from Nicotiana tabacum (Common tobacco).